The following is a 539-amino-acid chain: Propionyl-CoA carboxylase beta chain, mitochondrial (539 aa).

The transit peptide at 1–28 (MAAAVRVTAARARLRVVVRSLHAGVRSL) directs the protein to the mitochondrion. In terms of domain architecture, CoA carboxyltransferase N-terminal spans 32–290 (PVSVNERIEN…SNQDPAPIRE (259 aa)). A carboxyltransferase region spans residues 32 to 533 (PVSVNERIEN…SKKVQRPWRK (502 aa)). At Ser-71 the chain carries Phosphoserine. Lys-99 bears the N6-acetyllysine; alternate mark. The residue at position 99 (Lys-99) is an N6-succinyllysine; alternate. The CoA carboxyltransferase C-terminal domain maps to 294–533 (PSDRLVPELD…SKKVQRPWRK (240 aa)). Positions 325–358 (DERDFFEIMPNYAKNIIVGFARMNGRTVGIVGNQ) are acyl-CoA binding. N6-acetyllysine; alternate occurs at positions 474 and 489. Lys-474 and Lys-489 each carry N6-succinyllysine; alternate.

This sequence belongs to the AccD/PCCB family. In terms of assembly, the holoenzyme is a dodecamer composed of 6 PCCA/alpha subunits and 6 PCCB/beta subunits.

The protein localises to the mitochondrion matrix. It catalyses the reaction propanoyl-CoA + hydrogencarbonate + ATP = (S)-methylmalonyl-CoA + ADP + phosphate + H(+). The enzyme catalyses butanoyl-CoA + hydrogencarbonate + ATP = (2S)-ethylmalonyl-CoA + ADP + phosphate + H(+). It participates in metabolic intermediate metabolism; propanoyl-CoA degradation; succinyl-CoA from propanoyl-CoA: step 1/3. In terms of biological role, this is one of the 2 subunits of the biotin-dependent propionyl-CoA carboxylase (PCC), a mitochondrial enzyme involved in the catabolism of odd chain fatty acids, branched-chain amino acids isoleucine, threonine, methionine, and valine and other metabolites. Propionyl-CoA carboxylase catalyzes the carboxylation of propionyl-CoA/propanoyl-CoA to D-methylmalonyl-CoA/(S)-methylmalonyl-CoA. Within the holoenzyme, the alpha subunit catalyzes the ATP-dependent carboxylation of the biotin carried by the biotin carboxyl carrier (BCC) domain, while the beta subunit then transfers the carboxyl group from carboxylated biotin to propionyl-CoA. Propionyl-CoA carboxylase also significantly acts on butyryl-CoA/butanoyl-CoA, which is converted to ethylmalonyl-CoA/(2S)-ethylmalonyl-CoA at a much lower rate. Other alternative minor substrates include (2E)-butenoyl-CoA/crotonoyl-CoA. The protein is Propionyl-CoA carboxylase beta chain, mitochondrial of Sus scrofa (Pig).